Here is a 158-residue protein sequence, read N- to C-terminus: uncharacterized protein (158 aa).

This is an uncharacterized protein from Pasteurella multocida (strain Pm70).